Consider the following 131-residue polypeptide: Small ribosomal subunit protein uS8 (131 aa).

Belongs to the universal ribosomal protein uS8 family. As to quaternary structure, part of the 30S ribosomal subunit. Contacts proteins S5 and S12.

Its function is as follows. One of the primary rRNA binding proteins, it binds directly to 16S rRNA central domain where it helps coordinate assembly of the platform of the 30S subunit. The protein is Small ribosomal subunit protein uS8 of Neorickettsia sennetsu (strain ATCC VR-367 / Miyayama) (Ehrlichia sennetsu).